We begin with the raw amino-acid sequence, 364 residues long: UDP-3-O-acylglucosamine N-acyltransferase (364 aa).

The active-site Proton acceptor is His258.

It belongs to the transferase hexapeptide repeat family. LpxD subfamily. In terms of assembly, homotrimer.

It catalyses the reaction a UDP-3-O-[(3R)-3-hydroxyacyl]-alpha-D-glucosamine + a (3R)-hydroxyacyl-[ACP] = a UDP-2-N,3-O-bis[(3R)-3-hydroxyacyl]-alpha-D-glucosamine + holo-[ACP] + H(+). The protein operates within bacterial outer membrane biogenesis; LPS lipid A biosynthesis. Its function is as follows. Catalyzes the N-acylation of UDP-3-O-acylglucosamine using 3-hydroxyacyl-ACP as the acyl donor. Is involved in the biosynthesis of lipid A, a phosphorylated glycolipid that anchors the lipopolysaccharide to the outer membrane of the cell. The protein is UDP-3-O-acylglucosamine N-acyltransferase of Burkholderia orbicola (strain MC0-3).